A 423-amino-acid polypeptide reads, in one-letter code: 3-phosphoshikimate 1-carboxyvinyltransferase (423 aa).

The 3-phosphoshikimate site is built by K20, S21, and R25. K20 is a binding site for phosphoenolpyruvate. The phosphoenolpyruvate site is built by G91 and R119. 6 residues coordinate 3-phosphoshikimate: T163, S164, Q165, D305, Q328, and K332. Q165 contributes to the phosphoenolpyruvate binding site. The active-site Proton acceptor is the D305. Phosphoenolpyruvate-binding residues include R336 and R377.

This sequence belongs to the EPSP synthase family. In terms of assembly, monomer.

The protein resides in the cytoplasm. The enzyme catalyses 3-phosphoshikimate + phosphoenolpyruvate = 5-O-(1-carboxyvinyl)-3-phosphoshikimate + phosphate. Its pathway is metabolic intermediate biosynthesis; chorismate biosynthesis; chorismate from D-erythrose 4-phosphate and phosphoenolpyruvate: step 6/7. In terms of biological role, catalyzes the transfer of the enolpyruvyl moiety of phosphoenolpyruvate (PEP) to the 5-hydroxyl of shikimate-3-phosphate (S3P) to produce enolpyruvyl shikimate-3-phosphate and inorganic phosphate. This Acetivibrio thermocellus (strain ATCC 27405 / DSM 1237 / JCM 9322 / NBRC 103400 / NCIMB 10682 / NRRL B-4536 / VPI 7372) (Clostridium thermocellum) protein is 3-phosphoshikimate 1-carboxyvinyltransferase.